The chain runs to 356 residues: Glutamine synthetase (356 aa).

One can recognise a GS beta-grasp domain in the interval 26-105; that stretch reads IMAEYVWVDA…VLAECWNAGG (80 aa). Residues 112 to 356 form the GS catalytic domain; that stretch reads FRHDCVKVMD…TKALLQFSLA (245 aa).

Belongs to the glutamine synthetase family. As to quaternary structure, homooctamer.

It localises to the cytoplasm. The catalysed reaction is L-glutamate + NH4(+) + ATP = L-glutamine + ADP + phosphate + H(+). The chain is Glutamine synthetase (GLN1) from Fusarium solani subsp. phaseoli (Nectria haematococca).